The chain runs to 127 residues: Large ribosomal subunit protein uL22 (127 aa).

The protein belongs to the universal ribosomal protein uL22 family. In terms of assembly, part of the 50S ribosomal subunit.

In terms of biological role, this protein binds specifically to 23S rRNA; its binding is stimulated by other ribosomal proteins, e.g. L4, L17, and L20. It is important during the early stages of 50S assembly. It makes multiple contacts with different domains of the 23S rRNA in the assembled 50S subunit and ribosome. Functionally, the globular domain of the protein is located near the polypeptide exit tunnel on the outside of the subunit, while an extended beta-hairpin is found that lines the wall of the exit tunnel in the center of the 70S ribosome. The sequence is that of Large ribosomal subunit protein uL22 from Methylobacterium nodulans (strain LMG 21967 / CNCM I-2342 / ORS 2060).